The primary structure comprises 271 residues: 3-methyl-2-oxobutanoate hydroxymethyltransferase (271 aa).

D53 and D92 together coordinate Mg(2+). 3-methyl-2-oxobutanoate-binding positions include 53–54, D92, and K120; that span reads DS. Residue E122 coordinates Mg(2+). The active-site Proton acceptor is the E189.

Belongs to the PanB family. Homodecamer; pentamer of dimers. Mg(2+) serves as cofactor.

The protein localises to the cytoplasm. It carries out the reaction 3-methyl-2-oxobutanoate + (6R)-5,10-methylene-5,6,7,8-tetrahydrofolate + H2O = 2-dehydropantoate + (6S)-5,6,7,8-tetrahydrofolate. It functions in the pathway cofactor biosynthesis; (R)-pantothenate biosynthesis; (R)-pantoate from 3-methyl-2-oxobutanoate: step 1/2. Catalyzes the reversible reaction in which hydroxymethyl group from 5,10-methylenetetrahydrofolate is transferred onto alpha-ketoisovalerate to form ketopantoate. This is 3-methyl-2-oxobutanoate hydroxymethyltransferase from Paraburkholderia phymatum (strain DSM 17167 / CIP 108236 / LMG 21445 / STM815) (Burkholderia phymatum).